Consider the following 213-residue polypeptide: Methylthioribulose-1-phosphate dehydratase (213 aa).

The Zn(2+) site is built by His-104 and His-106.

Belongs to the aldolase class II family. MtnB subfamily. Requires Zn(2+) as cofactor.

It carries out the reaction 5-(methylsulfanyl)-D-ribulose 1-phosphate = 5-methylsulfanyl-2,3-dioxopentyl phosphate + H2O. It functions in the pathway amino-acid biosynthesis; L-methionine biosynthesis via salvage pathway; L-methionine from S-methyl-5-thio-alpha-D-ribose 1-phosphate: step 2/6. Functionally, catalyzes the dehydration of methylthioribulose-1-phosphate (MTRu-1-P) into 2,3-diketo-5-methylthiopentyl-1-phosphate (DK-MTP-1-P). The sequence is that of Methylthioribulose-1-phosphate dehydratase from Stenotrophomonas maltophilia (strain K279a).